We begin with the raw amino-acid sequence, 351 residues long: Photosystem II D2 protein (351 aa).

A helical transmembrane segment spans residues 39–59 (CAFLALGGWLTGTTFVTSWYT). Histidine 116 provides a ligand contact to chlorophyll a. The chain crosses the membrane as a helical span at residues 123 to 139 (GFMLRQFEIARLVGIRP). Pheophytin a contacts are provided by glutamine 128 and asparagine 141. A helical membrane pass occupies residues 151–164 (VFVSVFLMYPLGQS). Histidine 196 provides a ligand contact to chlorophyll a. A helical transmembrane segment spans residues 206 to 226 (GALLCAIHGATVENTLFEDGE). The a plastoquinone site is built by histidine 213 and phenylalanine 260. Histidine 213 is a binding site for Fe cation. Histidine 267 is a Fe cation binding site. Residues 277–293 (GLWMSAVGIVGLALNLR) traverse the membrane as a helical segment.

The protein belongs to the reaction center PufL/M/PsbA/D family. PSII is composed of 1 copy each of membrane proteins PsbA, PsbB, PsbC, PsbD, PsbE, PsbF, PsbH, PsbI, PsbJ, PsbK, PsbL, PsbM, PsbT, PsbX, PsbY, PsbZ, Psb30/Ycf12, peripheral proteins PsbO, CyanoQ (PsbQ), PsbU, PsbV and a large number of cofactors. It forms dimeric complexes. It depends on The D1/D2 heterodimer binds P680, chlorophylls that are the primary electron donor of PSII, and subsequent electron acceptors. It shares a non-heme iron and each subunit binds pheophytin, quinone, additional chlorophylls, carotenoids and lipids. There is also a Cl(-1) ion associated with D1 and D2, which is required for oxygen evolution. The PSII complex binds additional chlorophylls, carotenoids and specific lipids. as a cofactor.

It localises to the cellular thylakoid membrane. The catalysed reaction is 2 a plastoquinone + 4 hnu + 2 H2O = 2 a plastoquinol + O2. In terms of biological role, photosystem II (PSII) is a light-driven water:plastoquinone oxidoreductase that uses light energy to abstract electrons from H(2)O, generating O(2) and a proton gradient subsequently used for ATP formation. It consists of a core antenna complex that captures photons, and an electron transfer chain that converts photonic excitation into a charge separation. The D1/D2 (PsbA/PsbD) reaction center heterodimer binds P680, the primary electron donor of PSII as well as several subsequent electron acceptors. D2 is needed for assembly of a stable PSII complex. The polypeptide is Photosystem II D2 protein (Nostoc sp. (strain PCC 7120 / SAG 25.82 / UTEX 2576)).